The following is a 313-amino-acid chain: uncharacterized protein (313 aa).

Helical transmembrane passes span 41–61, 68–88, and 102–122; these read LAGT…GLMV, VHSV…FHYF, and QLLL…KLVL.

Belongs to the cytochrome b family.

The protein resides in the mitochondrion membrane. This is an uncharacterized protein from Arabidopsis thaliana (Mouse-ear cress).